A 180-amino-acid polypeptide reads, in one-letter code: MFEATTILGYRGEMGGKKFALIGGDGQVTLGNCVVKANATKIRSLYHNQVLSGFAGSTADAFSLFDMFERILESKKGDLFKSVVDFSKEWRKDKYLRRLEAMMIVLNLDHIFILSGMGDVLEAEDNKIAAIGSGGNYALSAARALDHFAHLEPRKLVEESLKIAGDLCIYTNTNIKILEL.

The active site involves Thr5. 3 residues coordinate Na(+): Gly165, Cys168, and Thr171.

It belongs to the peptidase T1B family. HslV subfamily. In terms of assembly, a double ring-shaped homohexamer of HslV is capped on each side by a ring-shaped HslU homohexamer. The assembly of the HslU/HslV complex is dependent on binding of ATP.

It is found in the cytoplasm. The catalysed reaction is ATP-dependent cleavage of peptide bonds with broad specificity.. With respect to regulation, allosterically activated by HslU binding. Its function is as follows. Protease subunit of a proteasome-like degradation complex believed to be a general protein degrading machinery. This is ATP-dependent protease subunit HslV from Helicobacter pylori (strain G27).